Here is a 421-residue protein sequence, read N- to C-terminus: UPF0229 protein lpp2857 (421 aa).

A disordered region spans residues 83 to 110 (IAGDRIKRPSGGGAGGAGGNASDSGEGE). A compositionally biased stretch (gly residues) spans 92 to 101 (SGGGAGGAGG).

The protein belongs to the UPF0229 family.

In Legionella pneumophila (strain Paris), this protein is UPF0229 protein lpp2857.